The sequence spans 98 residues: MTLTKVEIAENLTRKLELNKTEAKAMVESFFEEIRATLADGHNVKLSGFGNFELRDKASRPGRNPKTGENIPVSARRVVVFRPGQKLRARVEKSKPKG.

The disordered stretch occupies residues 54–74 (LRDKASRPGRNPKTGENIPVS).

The protein belongs to the bacterial histone-like protein family. In terms of assembly, heterodimer of an alpha and a beta chain.

In terms of biological role, this protein is one of the two subunits of integration host factor, a specific DNA-binding protein that functions in genetic recombination as well as in transcriptional and translational control. This is Integration host factor subunit alpha from Actinobacillus succinogenes (strain ATCC 55618 / DSM 22257 / CCUG 43843 / 130Z).